The following is a 419-amino-acid chain: Protein distal antenna-related (419 aa).

The HTH psq-type domain occupies 15 to 66; it reads TRGKRPLRNLTPNDKVRAIQRIHNGETKASVSRDIGVPESTLRGWCKNEQKL. Residues 42–62 constitute a DNA-binding region (H-T-H motif); sequence KASVSRDIGVPESTLRGWCKN. 2 disordered regions span residues 333–359 and 378–419; these read QPGG…PDLE and EASN…DAEQ.

In terms of assembly, interacts with itself, dan, ey and dac to form a complex (or complexes) containing the RD factors. In terms of tissue distribution, coexpressed with dan in the presumptive distal antenna, but not in the leg imaginal disk. Both proteins are also expressed in the brain and the eye region of the eye-antenna disk. First detected in early L3 eye disks in cells surrounding the newly initiated morphogenetic furrow. Highly expressed in evenly spaced clusters of cells anterior to the furrow, lower levels within and posterior to the furrow.

It is found in the nucleus. Probable transcription factor with a role in the retinal determination (RD) network. Regulates ato expression and is required for normal R8 induction and differentiation. Danr appears to repress Dan expression, but Dan is required for Danr expression anterior to the morphogenetic furrow (MF). Dan and Danr lie downstream of so and require dac function for highest levels of expression. Contributes to differentiation of antenna-specific characteristics; effector gene that acts downstream of homothorax (hth), Distal-less (Dll), cut (ct) and spineless (ss) genes to control differentiation of distal antennal structures. The polypeptide is Protein distal antenna-related (Drosophila melanogaster (Fruit fly)).